The chain runs to 130 residues: Small ribosomal subunit protein uS8 (130 aa).

This sequence belongs to the universal ribosomal protein uS8 family.

The protein localises to the cytoplasm. The sequence is that of Small ribosomal subunit protein uS8 (RPS15A) from Daucus carota (Wild carrot).